The following is an 859-amino-acid chain: DNA mismatch repair protein MutS (859 aa).

Gly-618–Ser-625 is a binding site for ATP.

The protein belongs to the DNA mismatch repair MutS family.

In terms of biological role, this protein is involved in the repair of mismatches in DNA. It is possible that it carries out the mismatch recognition step. This protein has a weak ATPase activity. This Shewanella halifaxensis (strain HAW-EB4) protein is DNA mismatch repair protein MutS.